The chain runs to 140 residues: UPF0299 membrane protein CGSHiGG_01475 (140 aa).

A run of 4 helical transmembrane segments spans residues 1 to 21, 33 to 52, 60 to 80, and 92 to 112; these read MIQK…MLYL, VPGS…TRVI, GASL…VGII, and ILLV…GFLG.

The protein belongs to the UPF0299 family.

The protein resides in the cell inner membrane. The sequence is that of UPF0299 membrane protein CGSHiGG_01475 from Haemophilus influenzae (strain PittGG).